Here is an 86-residue protein sequence, read N- to C-terminus: Insulin-related peptide 2 (86 aa).

A signal peptide spans 1–19 (MKFYIVFALILACAACVSS). Positions 20–43 (QEGTNFYCGRQLSRTLALVCWGAE) are excised as a propeptide. Arginine 63 bears the Arginine amide mark. Residues 67 to 86 (GPVDECCLKPCSIEEMLTYC) constitute a propeptide that is removed on maturation.

Belongs to the insulin family. As to expression, DAGWWVPPQSARALGGGR-amide: Expressed in corpora cardiaca (CC), corpora allata (CA), antennal lobe (AL) and gnathal ganglion (GNG) (at protein level). Expression in CC and CA detected in most animals, in AL in some animals and in GNG in few animals (at protein level).

It localises to the secreted. The chain is Insulin-related peptide 2 from Agrotis ipsilon (Black cutworm moth).